Consider the following 529-residue polypeptide: UDP-glucuronosyltransferase 2B28 (529 aa).

The first 24 residues, 1 to 24, serve as a signal peptide directing secretion; it reads MALKWTSVLLLIHLGCYFSSGSCG. Position 135 is an N6-succinyllysine (Lys-135). An N-linked (GlcNAc...) asparagine glycan is attached at Asn-315. A helical membrane pass occupies residues 495–517; that stretch reads GFLLACVATVIFVVTKFCLFCFW.

The protein belongs to the UDP-glycosyltransferase family. As to expression, expressed in the liver, breast and kidney.

It is found in the endoplasmic reticulum membrane. The protein resides in the cytoplasm. Its subcellular location is the perinuclear region. The catalysed reaction is glucuronate acceptor + UDP-alpha-D-glucuronate = acceptor beta-D-glucuronoside + UDP + H(+). UDP-glucuronosyltransferase (UGT) that catalyzes phase II biotransformation reactions in which lipophilic substrates are conjugated with glucuronic acid to increase the metabolite's water solubility, thereby facilitating excretion into either the urine or bile. Essential for the elimination and detoxification of drugs, xenobiotics and endogenous compounds. Catalyzes the glucuronidation of endogenous steroid hormones such as androgens (androsterone, 3alpha-androstanediol) and estrogens (estradiol, estrone). Catalyzes the glucuronidation of bile acid substrates, which are natural detergents for dietary lipids absorption. Displays glucuronidation activity toward the phenolic compounds eugenol. Its function is as follows. Lack UDP-glucuronosyltransferase (UGT) activity. In Homo sapiens (Human), this protein is UDP-glucuronosyltransferase 2B28.